The sequence spans 277 residues: Phosphoenolpyruvate synthase regulatory protein (277 aa).

157-164 (GVSRCGKT) provides a ligand contact to ADP.

Belongs to the pyruvate, phosphate/water dikinase regulatory protein family. PSRP subfamily.

It carries out the reaction [pyruvate, water dikinase] + ADP = [pyruvate, water dikinase]-phosphate + AMP + H(+). The catalysed reaction is [pyruvate, water dikinase]-phosphate + phosphate + H(+) = [pyruvate, water dikinase] + diphosphate. In terms of biological role, bifunctional serine/threonine kinase and phosphorylase involved in the regulation of the phosphoenolpyruvate synthase (PEPS) by catalyzing its phosphorylation/dephosphorylation. This is Phosphoenolpyruvate synthase regulatory protein from Salmonella gallinarum (strain 287/91 / NCTC 13346).